A 151-amino-acid polypeptide reads, in one-letter code: Ribosome maturation factor RimP (151 aa).

Belongs to the RimP family.

It is found in the cytoplasm. In terms of biological role, required for maturation of 30S ribosomal subunits. This chain is Ribosome maturation factor RimP, found in Shewanella putrefaciens (strain CN-32 / ATCC BAA-453).